The sequence spans 352 residues: Inhibin beta C chain (352 aa).

Positions Met-1 to Val-18 are cleaved as a signal peptide. A propeptide spanning residues Asn-19 to Arg-236 is cleaved from the precursor. Asn-111, Asn-143, Asn-161, and Asn-173 each carry an N-linked (GlcNAc...) asparagine glycan. 4 disulfide bridges follow: Cys-240/Cys-248, Cys-247/Cys-317, Cys-276/Cys-349, and Cys-280/Cys-351.

This sequence belongs to the TGF-beta family. Homodimeric or heterodimeric through association with alpha and beta subunits, linked by one or more disulfide bonds. Inhibins are heterodimers of one alpha and one beta subunit. Activins are homo- or heterodimers of beta subunits only. As to expression, mainly expressed in the adult liver.

It is found in the secreted. Its function is as follows. Inhibins and activins inhibit and activate, respectively, the secretion of follitropin by the pituitary gland. Inhibins/activins are involved in regulating a number of diverse functions such as hypothalamic and pituitary hormone secretion, gonadal hormone secretion, germ cell development and maturation, erythroid differentiation, insulin secretion, nerve cell survival, embryonic axial development or bone growth, depending on their subunit composition. Inhibins appear to oppose the functions of activins. The protein is Inhibin beta C chain (Inhbc) of Mus musculus (Mouse).